A 199-amino-acid chain; its full sequence is Recombination protein RecR (199 aa).

Residues 57 to 72 (CQSCRTYTEETLCPIC) form a C4-type zinc finger. A Toprim domain is found at 81-176 (STICVVETPA…MISRIAHGVP (96 aa)).

It belongs to the RecR family.

In terms of biological role, may play a role in DNA repair. It seems to be involved in an RecBC-independent recombinational process of DNA repair. It may act with RecF and RecO. The polypeptide is Recombination protein RecR (Shewanella baltica (strain OS155 / ATCC BAA-1091)).